Reading from the N-terminus, the 251-residue chain is Triosephosphate isomerase (251 aa).

9-11 (NWK) is a substrate binding site. Histidine 95 functions as the Electrophile in the catalytic mechanism. Catalysis depends on glutamate 167, which acts as the Proton acceptor. Substrate-binding positions include glycine 173, serine 213, and 234–235 (GG). Position 213 is a phosphoserine (serine 213).

Belongs to the triosephosphate isomerase family. As to quaternary structure, homodimer.

The protein resides in the cytoplasm. The enzyme catalyses D-glyceraldehyde 3-phosphate = dihydroxyacetone phosphate. It participates in carbohydrate biosynthesis; gluconeogenesis. The protein operates within carbohydrate degradation; glycolysis; D-glyceraldehyde 3-phosphate from glycerone phosphate: step 1/1. Its function is as follows. Involved in the gluconeogenesis. Catalyzes stereospecifically the conversion of dihydroxyacetone phosphate (DHAP) to D-glyceraldehyde-3-phosphate (G3P). In Bacillus anthracis, this protein is Triosephosphate isomerase.